Consider the following 185-residue polypeptide: NAD(P)H-dependent FMN reductase PA1204 (185 aa).

FMN-binding positions include 13–20 (SLRSGSYN) and 81–83 (YNY). 115–122 (SAGRFGTA) contributes to the NAD(+) binding site.

The protein belongs to the SsuE family. In terms of assembly, homodimer. Requires FMN as cofactor.

In terms of biological role, has NAD(P)H-dependent FMN reductase activity. The protein is NAD(P)H-dependent FMN reductase PA1204 of Pseudomonas aeruginosa (strain ATCC 15692 / DSM 22644 / CIP 104116 / JCM 14847 / LMG 12228 / 1C / PRS 101 / PAO1).